We begin with the raw amino-acid sequence, 673 residues long: UvrABC system protein B (673 aa).

One can recognise a Helicase ATP-binding domain in the interval 30–417; it reads NSILLGNKYQ…SSVVVDQIIR (388 aa). 43–50 serves as a coordination point for ATP; it reads GVTGSGKT. The short motif at 96-119 is the Beta-hairpin element; that stretch reads YYDYYQPESYVPSKDLFIEKEATI. Residues 434-600 form the Helicase C-terminal domain; sequence QMEDLYSEIQ…TIVKKIQNIL (167 aa). The 36-residue stretch at 627 to 662 folds into the UVR domain; sequence KKLIDKLKFDLEEAVNDERFEDAIVLRDKIKELSSK.

This sequence belongs to the UvrB family. As to quaternary structure, forms a heterotetramer with UvrA during the search for lesions. Interacts with UvrC in an incision complex.

The protein resides in the cytoplasm. In terms of biological role, the UvrABC repair system catalyzes the recognition and processing of DNA lesions. A damage recognition complex composed of 2 UvrA and 2 UvrB subunits scans DNA for abnormalities. Upon binding of the UvrA(2)B(2) complex to a putative damaged site, the DNA wraps around one UvrB monomer. DNA wrap is dependent on ATP binding by UvrB and probably causes local melting of the DNA helix, facilitating insertion of UvrB beta-hairpin between the DNA strands. Then UvrB probes one DNA strand for the presence of a lesion. If a lesion is found the UvrA subunits dissociate and the UvrB-DNA preincision complex is formed. This complex is subsequently bound by UvrC and the second UvrB is released. If no lesion is found, the DNA wraps around the other UvrB subunit that will check the other stand for damage. The polypeptide is UvrABC system protein B (Borreliella burgdorferi (strain ATCC 35210 / DSM 4680 / CIP 102532 / B31) (Borrelia burgdorferi)).